The sequence spans 905 residues: MPGKLRVHELAKQLGVTSKELLATLKEQGEFVKTASSTIEPPVIKKMRAHYEAKGGEDKAAEKNAPAATPASASKKPTEKKPATAAKPGPKPSAAPKPGAAPKPGGAPKPGGAPKPGATPKPGGAPKPGAQRKNTEKGSERAVTPRSMPKPGGTRRVANNPFSTGSSSDRPSPGPRPGGTKGQRSAGKPGDNRGGKGGARPQGDGNRSGGRRPSPAMMPSHPNPASMPSKAAGSGGGGRGRGGRGGGPGHGGPGHGGFRGRGGRRGGTAGAFGRPGGAPRRGKKSKRQKRHEFEEQQKHEVGGVRLPDGGGKVVRLRRGASLADFAEKIGADPAALVQALFNLGEMVTATASVSEDTLQLLGSEINYEVQVVSPEDEDRELLESFDLQFGEDEGGEEALEKRPPVVTVMGHVDHGKTRLLDTIRKTNEGAGEAGGITQGIGAYQTTVDLEDGPRTITFLDTPGHEAFTAMRARGAKSTDLAILVVAADDGVMPQTIEAINHAKAADIPVVVAVNKIDKPEASPDKIRGQLTEYGLVPEEYGGDTMFVDISAKNNINIDDLLEAVILTADAALELTANPDMDAQGSAIEAHLDRGRGPVATVIIQRGTLRIGDSIVVGDAHGRVRRMLDEFGNDVEEAGPSRPVQVQGLNGVPGAGDNLLVVEDDRVARQIAAQRDARKRSALQAKARKRVSLEDLDAVLKETSTLNLILKGDNAGSVEALEDALLDIEVDDEVQLNIIDRGVGAVTQTNVSLAAASDAIIIAFNVRAEGKATEEANAEGVDIRYYTVIYRAIEEVEAALKGMLKPIYEERDTGAAEIRALFKSSAVGTIAGCMVTEGKVKRNGKVRLVRDGNVITSDAKIESLRHEKDDANEINAGYECGMVLSYPDIQVGDIIQAYEEVEVPRD.

Over residues 50-62 (HYEAKGGEDKAAE) the composition is skewed to basic and acidic residues. The tract at residues 50 to 306 (HYEAKGGEDK…QKHEVGGVRL (257 aa)) is disordered. Residues 63–75 (KNAPAATPASASK) are compositionally biased toward low complexity. Over residues 89-125 (GPKPSAAPKPGAAPKPGGAPKPGGAPKPGATPKPGGA) the composition is skewed to pro residues. Positions 161-171 (PFSTGSSSDRP) are enriched in low complexity. A compositionally biased stretch (gly residues) spans 233–276 (GSGGGGRGRGGRGGGPGHGGPGHGGFRGRGGRRGGTAGAFGRPG). A compositionally biased stretch (basic residues) spans 280–290 (RRGKKSKRQKR). The segment covering 291 to 302 (HEFEEQQKHEVG) has biased composition (basic and acidic residues). The 175-residue stretch at 401–575 (KRPPVVTVMG…LTADAALELT (175 aa)) folds into the tr-type G domain. A G1 region spans residues 410–417 (GHVDHGKT). A GTP-binding site is contributed by 410–417 (GHVDHGKT). The segment at 435 to 439 (GITQG) is G2. A G3 region spans residues 460 to 463 (DTPG). Residues 460–464 (DTPGH) and 514–517 (NKID) each bind GTP. Residues 514–517 (NKID) are G4. Residues 550–552 (SAK) form a G5 region.

Belongs to the TRAFAC class translation factor GTPase superfamily. Classic translation factor GTPase family. IF-2 subfamily.

Its subcellular location is the cytoplasm. One of the essential components for the initiation of protein synthesis. Protects formylmethionyl-tRNA from spontaneous hydrolysis and promotes its binding to the 30S ribosomal subunits. Also involved in the hydrolysis of GTP during the formation of the 70S ribosomal complex. The sequence is that of Translation initiation factor IF-2 from Corynebacterium aurimucosum (strain ATCC 700975 / DSM 44827 / CIP 107346 / CN-1) (Corynebacterium nigricans).